We begin with the raw amino-acid sequence, 396 residues long: Elongation factor Tu (396 aa).

A tr-type G domain is found at 11 to 205 (KPHVNIGTIG…TVDEYIPTPE (195 aa)). Residues 20–27 (GHVDHGKT) form a G1 region. 20-27 (GHVDHGKT) serves as a coordination point for GTP. Position 27 (threonine 27) interacts with Mg(2+). The G2 stretch occupies residues 61–65 (GITIN). Positions 82–85 (DAPG) are G3. Residues 82–86 (DAPGH) and 137–140 (NKVD) each bind GTP. A G4 region spans residues 137-140 (NKVD). The segment at 175-177 (SAL) is G5.

It belongs to the TRAFAC class translation factor GTPase superfamily. Classic translation factor GTPase family. EF-Tu/EF-1A subfamily. Monomer.

It localises to the cytoplasm. It catalyses the reaction GTP + H2O = GDP + phosphate + H(+). Its function is as follows. GTP hydrolase that promotes the GTP-dependent binding of aminoacyl-tRNA to the A-site of ribosomes during protein biosynthesis. The chain is Elongation factor Tu from Lactobacillus johnsonii (strain CNCM I-12250 / La1 / NCC 533).